Reading from the N-terminus, the 499-residue chain is MTILEVGSQLIESAVLQMSLTSVLLTASVFTLTLGYFSKLLFTQHSSEHTKYPPHIPSSLPFLGQAVAFGRSPIEFLEKAYEQYGPVVSFTMVGKTFTYLLGSDAAALMFNSKNEDLNAEDVYARLTTPVFGKGVAYDVPNPLFLEQKKMLKTGLNIAQFKQHVEIIEEETKDYFRRWGESGERNLFDALSELIILTASRCLHGCEIRSLLDERVAQLYADLDGGFTHAAWLLPGWLPLPSFRRRDRAHLEIKKIFYNVIKKRREDTEKHDDILQTLIDATYKDGRPLSDDEIAGMLIGLLLAGQHTSSTTSAWMGFFLARDRALQERCYSEQKSVCGEELPPLHYDQLKDLSLLDRCLKETLRLRPPIMTMMRMAKTPQKVGEYTIPPGHQVCVSPTVNHRLQDTWAERLDFDPDRYLHDNPAAGEKFAYIPFGAGRHRCIGENFAYVQIKTIWSTLLRMFDFELVDGHFPPVNYTTMIHTPHNPIIRYTRRNTQPQQ.

A helical membrane pass occupies residues 13–35 (SAVLQMSLTSVLLTASVFTLTLG). C441 provides a ligand contact to heme.

It belongs to the cytochrome P450 family. Heme serves as cofactor. In terms of tissue distribution, strongly expressed in intestine. Moderately expressed in liver, with higher levels in females compared to males. Also detected at low levels in brain, eye, kidney and testis.

It is found in the endoplasmic reticulum membrane. The protein resides in the membrane. It carries out the reaction a 14alpha-methyl steroid + 3 reduced [NADPH--hemoprotein reductase] + 3 O2 = a Delta(14) steroid + formate + 3 oxidized [NADPH--hemoprotein reductase] + 4 H2O + 4 H(+). The catalysed reaction is lanosterol + 3 reduced [NADPH--hemoprotein reductase] + 3 O2 = 4,4-dimethyl-5alpha-cholesta-8,14,24-trien-3beta-ol + formate + 3 oxidized [NADPH--hemoprotein reductase] + 4 H2O + 4 H(+). It catalyses the reaction 24,25-dihydrolanosterol + 3 reduced [NADPH--hemoprotein reductase] + 3 O2 = 4,4-dimethyl-8,14-cholestadien-3beta-ol + formate + 3 oxidized [NADPH--hemoprotein reductase] + 4 H2O + 4 H(+). The enzyme catalyses a 14alpha-methyl steroid + reduced [NADPH--hemoprotein reductase] + O2 = a 14alpha-hydroxymethyl steroid + oxidized [NADPH--hemoprotein reductase] + H2O + H(+). It carries out the reaction a 14alpha-hydroxymethyl steroid + reduced [NADPH--hemoprotein reductase] + O2 = a 14alpha-formyl steroid + oxidized [NADPH--hemoprotein reductase] + 2 H2O + H(+). The catalysed reaction is a 14alpha-formyl steroid + reduced [NADPH--hemoprotein reductase] + O2 = a Delta(14) steroid + formate + oxidized [NADPH--hemoprotein reductase] + H2O + 2 H(+). It catalyses the reaction lanosterol + reduced [NADPH--hemoprotein reductase] + O2 = 32-hydroxylanosterol + oxidized [NADPH--hemoprotein reductase] + H2O + H(+). The enzyme catalyses 32-hydroxylanosterol + reduced [NADPH--hemoprotein reductase] + O2 = 32-oxolanosterol + oxidized [NADPH--hemoprotein reductase] + 2 H2O + H(+). It carries out the reaction 32-oxolanosterol + reduced [NADPH--hemoprotein reductase] + O2 = 4,4-dimethyl-5alpha-cholesta-8,14,24-trien-3beta-ol + formate + oxidized [NADPH--hemoprotein reductase] + H2O + 2 H(+). The catalysed reaction is 24,25-dihydrolanosterol + reduced [NADPH--hemoprotein reductase] + O2 = 32-hydroxy-24,25-dihydrolanosterol + oxidized [NADPH--hemoprotein reductase] + H2O + H(+). It catalyses the reaction 32-hydroxy-24,25-dihydrolanosterol + reduced [NADPH--hemoprotein reductase] + O2 = 32-oxo-24,25-dihydrolanosterol + oxidized [NADPH--hemoprotein reductase] + 2 H2O + H(+). The enzyme catalyses 32-oxo-24,25-dihydrolanosterol + reduced [NADPH--hemoprotein reductase] + O2 = 4,4-dimethyl-8,14-cholestadien-3beta-ol + formate + oxidized [NADPH--hemoprotein reductase] + H2O + 2 H(+). It participates in steroid biosynthesis; zymosterol biosynthesis; zymosterol from lanosterol: step 1/6. Inhibited by ketoconazole. May also be inhibited to a lesser extent by propiconazole. Functionally, sterol 14alpha-demethylase that plays a critical role in the cholesterol biosynthesis pathway, being cholesterol the major sterol component in deuterostome membranes as well as a precursor for steroid hormone synthesis. Cytochrome P450 monooxygenase that catalyzes the three-step oxidative removal of the 14alpha-methyl group (C-32) of sterols such as lanosterol (lanosta-8,24-dien-3beta-ol) and 24,25-dihydrolanosterol (DHL) in the form of formate, and converts the sterols to 4,4-dimethyl-5alpha-cholesta-8,14,24-trien-3beta-ol and 4,4-dimethyl-8,14-cholestadien-3beta-ol, respectively, which are intermediates of cholesterol biosynthesis. Can also demethylate substrates not intrinsic to deuterostomes, such as eburicol (24-methylene-24,25-dihydrolanosterol), but at a lower rate than DHL. The polypeptide is Lanosterol 14-alpha demethylase (Danio rerio (Zebrafish)).